The sequence spans 307 residues: Methionyl-tRNA formyltransferase (307 aa).

110 to 113 (SLLP) provides a ligand contact to (6S)-5,6,7,8-tetrahydrofolate.

Belongs to the Fmt family.

The enzyme catalyses L-methionyl-tRNA(fMet) + (6R)-10-formyltetrahydrofolate = N-formyl-L-methionyl-tRNA(fMet) + (6S)-5,6,7,8-tetrahydrofolate + H(+). Attaches a formyl group to the free amino group of methionyl-tRNA(fMet). The formyl group appears to play a dual role in the initiator identity of N-formylmethionyl-tRNA by promoting its recognition by IF2 and preventing the misappropriation of this tRNA by the elongation apparatus. This chain is Methionyl-tRNA formyltransferase, found in Rhodococcus erythropolis (strain PR4 / NBRC 100887).